We begin with the raw amino-acid sequence, 55 residues long: Seripauperin-7 (55 aa).

Positions 1 to 20 (MVKLTSIAAGVAAIAAGASA) are cleaved as a signal peptide.

This sequence belongs to the SRP1/TIP1 family. Seripauperin subfamily.

The chain is Seripauperin-7 (PAU7) from Saccharomyces cerevisiae (strain ATCC 204508 / S288c) (Baker's yeast).